A 102-amino-acid polypeptide reads, in one-letter code: Small ribosomal subunit protein uS10 (102 aa).

The protein belongs to the universal ribosomal protein uS10 family. Part of the 30S ribosomal subunit.

In terms of biological role, involved in the binding of tRNA to the ribosomes. The polypeptide is Small ribosomal subunit protein uS10 (Bifidobacterium animalis subsp. lactis (strain AD011)).